We begin with the raw amino-acid sequence, 281 residues long: Pantothenate synthetase (281 aa).

31 to 38 (MGNLHAGH) is an ATP binding site. H38 (proton donor) is an active-site residue. Residue Q62 participates in (R)-pantoate binding. Residue Q62 participates in beta-alanine binding. ATP is bound at residue 150–153 (GKKD). Position 156 (Q156) interacts with (R)-pantoate. Residues V179 and 187 to 190 (MSSR) each bind ATP.

Belongs to the pantothenate synthetase family. As to quaternary structure, homodimer.

Its subcellular location is the cytoplasm. The enzyme catalyses (R)-pantoate + beta-alanine + ATP = (R)-pantothenate + AMP + diphosphate + H(+). It participates in cofactor biosynthesis; (R)-pantothenate biosynthesis; (R)-pantothenate from (R)-pantoate and beta-alanine: step 1/1. Its function is as follows. Catalyzes the condensation of pantoate with beta-alanine in an ATP-dependent reaction via a pantoyl-adenylate intermediate. The chain is Pantothenate synthetase from Xylella fastidiosa (strain M12).